The sequence spans 508 residues: UTP--glucose-1-phosphate uridylyltransferase (508 aa).

S13 carries the phosphoserine modification. Residues 113-116 (LNGG), K127, Q190, and G222 each bind UTP. A substrate-binding site is contributed by 115 to 116 (GG). K127 lines the Mg(2+) pocket. Residues H223 and 251 to 253 (NID) each bind substrate. The UTP site is built by D253 and K396. D253 contributes to the Mg(2+) binding site. K396 is an active-site residue. T426 carries the post-translational modification Phosphothreonine. S434 is subject to Phosphoserine. An N6-acetyllysine modification is found at K438. 2 positions are modified to phosphoserine: S448 and S461. Residues 457–508 (HLTVSGDVTFGKNVSLKGTVIIIXNHGDRIDIPPGAVLENKIVSGNLRILDH) form an oligomerization region. The interval 502 to 503 (NL) is critical for end-to-end subunit interaction.

It belongs to the UDPGP type 1 family. As to quaternary structure, homooctamer.

Its subcellular location is the cytoplasm. It carries out the reaction alpha-D-glucose 1-phosphate + UTP + H(+) = UDP-alpha-D-glucose + diphosphate. The protein operates within glycan biosynthesis; glycogen biosynthesis. UTP--glucose-1-phosphate uridylyltransferase catalyzing the conversion of glucose-1-phosphate into UDP-glucose, a crucial precursor for the production of glycogen. In Sus scrofa (Pig), this protein is UTP--glucose-1-phosphate uridylyltransferase (UGP2).